The chain runs to 221 residues: MALPNQQTVDYPSFKLVIVGDGGTGKTTFVKRHLTGEFEKKYEPTIGVEVHPLDFFTNCGKIRFYCWDTAGQEKFGGLRDGYYIHGQCAIIMFDVTARLTYKNVPTWHRDLCRVCENIPIVLCGNKVDVKNRQVKAKQVTFHRKKNLQYYEISAKSNYNFEKPFLYLARKLAGDQNLHFVETPALAPPEVHIDIADQQKNEAELLQAAAQPLPDDDDDIFE.

The Small GTPase Ran-type domain maps to 10 to 174 (DYPSFKLVIV…LYLARKLAGD (165 aa)). A GTP-binding site is contributed by 21-28 (DGGTGKTT). The switch-I stretch occupies residues 40-48 (KKYEPTIGV). GTP-binding positions include glycine 71, 125–128 (NKVD), and 153–155 (SAK). Residues 71–87 (GQEKFGGLRDGYYIHGQ) are switch-II.

It belongs to the small GTPase superfamily. Ran family. In terms of assembly, found in a nuclear export complex with RanGTP, exportin and pre-miRNA. Interacts with RANBP1A and RANBP1B. Interacts with TRN1. Interacts with ATX1. Interacts with KPNB1. Binds to XPO1. Interacts with MOS14. Binds to NTF2B.

It localises to the nucleus. Functionally, GTP-binding protein involved in nucleocytoplasmic transport. Required for the import of protein into the nucleus and also for RNA export. Involved in chromatin condensation and control of cell cycle. The chain is GTP-binding nuclear protein Ran-1 (RAN1) from Arabidopsis thaliana (Mouse-ear cress).